The following is a 93-amino-acid chain: Acylphosphatase (93 aa).

One can recognise an Acylphosphatase-like domain in the interval 5-91; the sequence is RAHFLVKGFV…RGETTFRIRS (87 aa). Active-site residues include arginine 20 and asparagine 38.

This sequence belongs to the acylphosphatase family.

The enzyme catalyses an acyl phosphate + H2O = a carboxylate + phosphate + H(+). This Moorella thermoacetica (strain ATCC 39073 / JCM 9320) protein is Acylphosphatase (acyP).